The following is a 426-amino-acid chain: Diaminobutyrate--2-oxoglutarate transaminase (426 aa).

Position 274 is an N6-(pyridoxal phosphate)lysine (Lys-274).

The protein belongs to the class-III pyridoxal-phosphate-dependent aminotransferase family. Pyridoxal 5'-phosphate is required as a cofactor.

The catalysed reaction is L-2,4-diaminobutanoate + 2-oxoglutarate = L-aspartate 4-semialdehyde + L-glutamate. It functions in the pathway amine and polyamine biosynthesis; ectoine biosynthesis; L-ectoine from L-aspartate 4-semialdehyde: step 1/3. In terms of biological role, catalyzes reversively the conversion of L-aspartate beta-semialdehyde (ASA) to L-2,4-diaminobutyrate (DABA) by transamination with L-glutamate. The chain is Diaminobutyrate--2-oxoglutarate transaminase (ectB) from Oceanobacillus iheyensis (strain DSM 14371 / CIP 107618 / JCM 11309 / KCTC 3954 / HTE831).